The following is a 139-amino-acid chain: MLERIGISLEDGLLEQFDKLIAEKGYVNRSEAIRDLIRDALVQRAFTESSGREERVAVVTLVYDHDSSSLAQKLAHIQHENHRAVVSALHVHMDPHNCLEVLVLRGRGKDVVAMGESLVATKGVKYGKLVPATAGHDLG.

Positions 79, 90, 92, and 98 each coordinate Ni(2+).

Belongs to the transcriptional regulatory CopG/NikR family. Requires Ni(2+) as cofactor.

In terms of biological role, transcriptional regulator. This Anaeromyxobacter sp. (strain K) protein is Putative nickel-responsive regulator.